We begin with the raw amino-acid sequence, 173 residues long: MKRSEKAAIIEQLKAKADAAPIAVVTDFKGMPVEELTRLRVKLRESGGDYTVVKNTLARIALTGGTHDVLKDNFSENCGVAFGSEDPVAVAKALVEFRKGSKLFAIRFGSLEGQFLDDKQLDALAKLPGKQELLAKALGTMNAVPTNFVCLFANLLRNFLYALKAIQEQKEAA.

The protein belongs to the universal ribosomal protein uL10 family. In terms of assembly, part of the ribosomal stalk of the 50S ribosomal subunit. The N-terminus interacts with L11 and the large rRNA to form the base of the stalk. The C-terminus forms an elongated spine to which L12 dimers bind in a sequential fashion forming a multimeric L10(L12)X complex.

Forms part of the ribosomal stalk, playing a central role in the interaction of the ribosome with GTP-bound translation factors. This Oleidesulfovibrio alaskensis (strain ATCC BAA-1058 / DSM 17464 / G20) (Desulfovibrio alaskensis) protein is Large ribosomal subunit protein uL10.